Consider the following 191-residue polypeptide: Potassium-transporting ATPase KdpC subunit (191 aa).

The helical transmembrane segment at 10 to 30 (ITLVFCVFFSVFYILVLWLFA) threads the bilayer.

It belongs to the KdpC family. In terms of assembly, the system is composed of three essential subunits: KdpA, KdpB and KdpC.

Its subcellular location is the cell inner membrane. Functionally, part of the high-affinity ATP-driven potassium transport (or Kdp) system, which catalyzes the hydrolysis of ATP coupled with the electrogenic transport of potassium into the cytoplasm. This subunit acts as a catalytic chaperone that increases the ATP-binding affinity of the ATP-hydrolyzing subunit KdpB by the formation of a transient KdpB/KdpC/ATP ternary complex. The polypeptide is Potassium-transporting ATPase KdpC subunit (Bacteroides fragilis (strain YCH46)).